We begin with the raw amino-acid sequence, 338 residues long: DNA-directed RNA polymerase subunit alpha (338 aa).

The alpha N-terminal domain (alpha-NTD) stretch occupies residues 1-234 (MIQKNWQELT…DQLNVFVNFE (234 aa)). The alpha C-terminal domain (alpha-CTD) stretch occupies residues 250–338 (FNPALLKKVD…DLAKRFEEHY (89 aa)).

This sequence belongs to the RNA polymerase alpha chain family. As to quaternary structure, homodimer. The RNAP catalytic core consists of 2 alpha, 1 beta, 1 beta' and 1 omega subunit. When a sigma factor is associated with the core the holoenzyme is formed, which can initiate transcription.

The enzyme catalyses RNA(n) + a ribonucleoside 5'-triphosphate = RNA(n+1) + diphosphate. DNA-dependent RNA polymerase catalyzes the transcription of DNA into RNA using the four ribonucleoside triphosphates as substrates. In Methylocella silvestris (strain DSM 15510 / CIP 108128 / LMG 27833 / NCIMB 13906 / BL2), this protein is DNA-directed RNA polymerase subunit alpha.